Consider the following 408-residue polypeptide: MKITDAKVFVGGPGKNYVTVKVMTDSGVYGLGDATLNNRETLPAKYLTDYLVPNLIGMDPRRSEDIWQFLYRGAYFRRGPVAMAAFGAIDMALWDIKGKLADMPLYQLFGGKSRDGAMVYGHATGADLEDLMDSIAHYVEQGYKAVRVQCGIPGMPTASYAVPEERGASKHYISDFSGIRPKTEIWDSGKYLRWMPGALMAIRERFGPDLHILHDVHHRLTPREAAQFAKAVEPVDLYWLEDPTPAEDQAALRLVRQHSTTPIAIGEVFNSIWECNKLIEEELIDFIRVAATYAGGITHVKRIVDLAGLHHVRTGFHGAPSHSPLCMAAHAHLNAWAPNFGIQEYLVLGTPDCDALFPSDHRMEDGMVHVSDAPGLGVDFDEAEAARYEYRPGSHPVVRLTDGTMWDY.

Residue Asp-215 participates in Mg(2+) binding. His-217 is a D-arabinonate binding site. Mg(2+) is bound by residues Glu-241 and Glu-267. Residues Glu-267, Arg-288, His-317, and Glu-344 each coordinate D-arabinonate.

The protein belongs to the mandelate racemase/muconate lactonizing enzyme family. GalD subfamily.

Its function is as follows. Has no detectable activity with D-mannonate and with a panel of 70 other acid sugars (in vitro), in spite of the conservation of the residues that are expected to be important for catalytic activity and cofactor binding. May have evolved a divergent function. The sequence is that of D-galactonate dehydratase family member OG2516_05608 from Oceanicola granulosus (strain ATCC BAA-861 / DSM 15982 / KCTC 12143 / HTCC2516).